The following is a 316-amino-acid chain: Methionyl-tRNA formyltransferase (316 aa).

Residue 111-114 coordinates (6S)-5,6,7,8-tetrahydrofolate; it reads SLLP.

It belongs to the Fmt family.

It catalyses the reaction L-methionyl-tRNA(fMet) + (6R)-10-formyltetrahydrofolate = N-formyl-L-methionyl-tRNA(fMet) + (6S)-5,6,7,8-tetrahydrofolate + H(+). Its function is as follows. Attaches a formyl group to the free amino group of methionyl-tRNA(fMet). The formyl group appears to play a dual role in the initiator identity of N-formylmethionyl-tRNA by promoting its recognition by IF2 and preventing the misappropriation of this tRNA by the elongation apparatus. The chain is Methionyl-tRNA formyltransferase from Limosilactobacillus fermentum (strain NBRC 3956 / LMG 18251) (Lactobacillus fermentum).